Consider the following 498-residue polypeptide: 4-aminobutyrate aminotransferase (498 aa).

Glycine 164–serine 165 is a pyridoxal 5'-phosphate binding site. Substrate is bound at residue arginine 222. Lysine 356 is subject to N6-(pyridoxal phosphate)lysine. Threonine 381 is a pyridoxal 5'-phosphate binding site.

Belongs to the class-III pyridoxal-phosphate-dependent aminotransferase family. As to quaternary structure, homodimer. The cofactor is pyridoxal 5'-phosphate.

The protein resides in the cytoplasm. The catalysed reaction is 4-aminobutanoate + 2-oxoglutarate = succinate semialdehyde + L-glutamate. Its function is as follows. Deaminates gamma-aminobutyric acid (GABA) to succinate-semialdehyde, which in turn is converted to succinate by the succinate semialdehyde dehydrogenase. Required for the degradation of GABA, which is important for utilization of GABA as nitrogen source. The sequence is that of 4-aminobutyrate aminotransferase (gatA) from Emericella nidulans (strain FGSC A4 / ATCC 38163 / CBS 112.46 / NRRL 194 / M139) (Aspergillus nidulans).